The following is an 878-amino-acid chain: MTSAEIREAFLRYFETQGHTRVASSSLVPANDPTLLFTNAGMNQFKDCFLGLEKRDYVRATTSQKCVRAGGKHNDLDNVGYTARHHTFFEMLGNFSFGDYFKRDALKFAWEFLTSEQWLALPKDKLYVTVYHTDDEAYDIWNKEIGLAPERIIRIGDNKGEKYASDNFWAMGDTGPCGPCSEIFFDHGEHIWGGLPGSPEEDGDRFIEIWNNVFMQFNRTADGVLHPLPAPSVDTGMGLERISAVLQHVNSNYDIDLFQHLLKAAANIIGIEDEGQPSLRVVADHARSCCFLIADGVNPSNEGRGYVLRRIIRRAVRHGNKLGATGTFFYKMLQPLIEVMGQAYPELEARREVIEATLIREEEQFAKTLEQGLKLLEGELAQLKDKTIPGATVFKLYDTYGFPTDLTADIARERGFIIDEAGFEVEMAAQRQRARDAGKFAVDYNNIVKVEGETQFDGYTNTTGQGQIVAIYKDGVQVDEVSEGDEALIVLNQTPFYAESGGQIGDTGIFKNETGIFEVQDTKKSGGAFVHQGIVTVGNLKTSQNVEAIVKADIREATARNHSATHLLHAALRQILGSHVQQKGSLVASDILRFDFANDQPVSFEQLQQVERLVNAEIIANTAVTTELLDIETAKAKGAMMLFGEKYGDEVRVLSMGSVIDEKNFSIELCGGIHVKRTGDIGLFKITSEGGVAAGVRRIEAVTGTKALEVVQKADHDIQHINSLLKAQKDQTVERVQANVELVSALQKQIEQLNQKLANFQAADLIDQVQTIAGRQTLITTVQGVDAKALRNLHDSVKSKLENAVIVLAGVEGDKVSLLASVASQYTANLKAGDIIKHLATELGGKGGGKPDLAQGGAPLNEKFGQVMAALPAWLEQK.

4 residues coordinate Zn(2+): H562, H566, C670, and H674.

The protein belongs to the class-II aminoacyl-tRNA synthetase family. The cofactor is Zn(2+).

Its subcellular location is the cytoplasm. It carries out the reaction tRNA(Ala) + L-alanine + ATP = L-alanyl-tRNA(Ala) + AMP + diphosphate. Functionally, catalyzes the attachment of alanine to tRNA(Ala) in a two-step reaction: alanine is first activated by ATP to form Ala-AMP and then transferred to the acceptor end of tRNA(Ala). Also edits incorrectly charged Ser-tRNA(Ala) and Gly-tRNA(Ala) via its editing domain. The protein is Alanine--tRNA ligase of Acinetobacter baumannii (strain ACICU).